The primary structure comprises 302 residues: Genome polyprotein (302 aa).

Residues 28–46 show a composition bias toward basic and acidic residues; the sequence is ENLDTGKDSKKDTSGKGDK. The tract at residues 28–72 is disordered; the sequence is ENLDTGKDSKKDTSGKGDKPQNSQTGQGSKEQTKIGTVSKDVNVG. Residues 47–63 show a composition bias toward polar residues; that stretch reads PQNSQTGQGSKEQTKIG.

Belongs to the potyviridae genome polyprotein family. Genome polyprotein of potyviruses undergoes post-translational proteolytic processing by the main proteinase NIa-pro resulting in the production of at least ten individual proteins. The P1 proteinase and the HC-pro cleave only their respective C-termini autocatalytically. 6K1 is essential for proper proteolytic separation of P3 from CI.

It localises to the virion. It carries out the reaction RNA(n) + a ribonucleoside 5'-triphosphate = RNA(n+1) + diphosphate. In terms of biological role, an RNA-dependent RNA polymerase that plays an essential role in the virus replication. Its function is as follows. Involved in aphid transmission, cell-to-cell and systemis movement, encapsidation of the viral RNA and in the regulation of viral RNA amplification. In Watermelon mosaic virus II (isolate Australia), this protein is Genome polyprotein.